A 115-amino-acid chain; its full sequence is Large ribosomal subunit protein bL20 (115 aa).

This sequence belongs to the bacterial ribosomal protein bL20 family.

Functionally, binds directly to 23S ribosomal RNA and is necessary for the in vitro assembly process of the 50S ribosomal subunit. It is not involved in the protein synthesizing functions of that subunit. In Prochlorococcus marinus (strain MIT 9301), this protein is Large ribosomal subunit protein bL20.